The following is a 541-amino-acid chain: Propionyl-CoA carboxylase beta chain, mitochondrial (541 aa).

A mitochondrion-targeting transit peptide spans 1-28 (MAAVIRIRAMAAGTRLRVLNCGLGTTIR). One can recognise a CoA carboxyltransferase N-terminal domain in the interval 34–292 (PVSVNERIEN…SNQDPASIRE (259 aa)). Residues 34–535 (PVSVNERIEN…SKKVHRPWRK (502 aa)) form a carboxyltransferase region. Residue Ser-73 is modified to Phosphoserine. Lys-101 carries the post-translational modification N6-acetyllysine; alternate. The residue at position 101 (Lys-101) is an N6-succinyllysine; alternate. N6-succinyllysine is present on Lys-250. Positions 296 to 535 (PSDRLVPELD…SKKVHRPWRK (240 aa)) constitute a CoA carboxyltransferase C-terminal domain. The tract at residues 327 to 360 (DEREFFEIMPNYAKNIVIGFARMNGRTVGIVGNQ) is acyl-CoA binding. N6-acetyllysine; alternate is present on residues Lys-476 and Lys-491. Residues Lys-476 and Lys-491 each carry the N6-succinyllysine; alternate modification.

The protein belongs to the AccD/PCCB family. In terms of assembly, the holoenzyme is a dodecamer composed of 6 PCCA/alpha subunits and 6 PCCB/beta subunits.

Its subcellular location is the mitochondrion matrix. It catalyses the reaction propanoyl-CoA + hydrogencarbonate + ATP = (S)-methylmalonyl-CoA + ADP + phosphate + H(+). It carries out the reaction butanoyl-CoA + hydrogencarbonate + ATP = (2S)-ethylmalonyl-CoA + ADP + phosphate + H(+). Its pathway is metabolic intermediate metabolism; propanoyl-CoA degradation; succinyl-CoA from propanoyl-CoA: step 1/3. This is one of the 2 subunits of the biotin-dependent propionyl-CoA carboxylase (PCC), a mitochondrial enzyme involved in the catabolism of odd chain fatty acids, branched-chain amino acids isoleucine, threonine, methionine, and valine and other metabolites. Propionyl-CoA carboxylase catalyzes the carboxylation of propionyl-CoA/propanoyl-CoA to D-methylmalonyl-CoA/(S)-methylmalonyl-CoA. Within the holoenzyme, the alpha subunit catalyzes the ATP-dependent carboxylation of the biotin carried by the biotin carboxyl carrier (BCC) domain, while the beta subunit then transfers the carboxyl group from carboxylated biotin to propionyl-CoA. Propionyl-CoA carboxylase also significantly acts on butyryl-CoA/butanoyl-CoA, which is converted to ethylmalonyl-CoA/(2S)-ethylmalonyl-CoA. Other alternative minor substrates include (2E)-butenoyl-CoA/crotonoyl-CoA. This is Propionyl-CoA carboxylase beta chain, mitochondrial from Rattus norvegicus (Rat).